The sequence spans 96 residues: Probable quinol oxidase subunit 4 (96 aa).

3 helical membrane passes run 8–28 (TVGFIASIVLTLLAVFVTLYT), 37–57 (TIIFGFAFIQAAVQLLMFMHL), and 68–88 (FKVIFAIIITLVTVIGTYWVM).

The protein belongs to the cytochrome c oxidase bacterial subunit 4 family.

Its subcellular location is the cell membrane. The catalysed reaction is 2 a quinol + O2 = 2 a quinone + 2 H2O. Its function is as follows. Catalyzes quinol oxidation with the concomitant reduction of oxygen to water. This is Probable quinol oxidase subunit 4 (qoxD) from Staphylococcus haemolyticus (strain JCSC1435).